Here is a 284-residue protein sequence, read N- to C-terminus: Shikimate dehydrogenase (NADP(+)) (284 aa).

Shikimate is bound by residues 20–22 (SIS) and serine 67. Residue lysine 71 is the Proton acceptor of the active site. Aspartate 83 provides a ligand contact to NADP(+). Positions 92 and 107 each coordinate shikimate. NADP(+) is bound by residues 129–133 (GAGGA) and isoleucine 227. Tyrosine 229 is a shikimate binding site. Glycine 250 provides a ligand contact to NADP(+).

The protein belongs to the shikimate dehydrogenase family. As to quaternary structure, homodimer.

It catalyses the reaction shikimate + NADP(+) = 3-dehydroshikimate + NADPH + H(+). Its pathway is metabolic intermediate biosynthesis; chorismate biosynthesis; chorismate from D-erythrose 4-phosphate and phosphoenolpyruvate: step 4/7. Its function is as follows. Involved in the biosynthesis of the chorismate, which leads to the biosynthesis of aromatic amino acids. Catalyzes the reversible NADPH linked reduction of 3-dehydroshikimate (DHSA) to yield shikimate (SA). This is Shikimate dehydrogenase (NADP(+)) from Streptococcus pneumoniae serotype 2 (strain D39 / NCTC 7466).